Reading from the N-terminus, the 191-residue chain is Protein Ves (191 aa).

It belongs to the Ves family.

This is Protein Ves from Shigella flexneri serotype 5b (strain 8401).